The chain runs to 81 residues: Short neurotoxin 1 (81 aa).

An N-terminal signal peptide occupies residues 1–21 (MKTLLLSPVVVTIVCLDLGYT). 4 cysteine pairs are disulfide-bonded: C24–C43, C38–C60, C62–C73, and C74–C79.

It belongs to the three-finger toxin family. Short-chain subfamily. Type I alpha-neurotoxin sub-subfamily. As to expression, expressed by the venom gland.

The protein resides in the secreted. Its function is as follows. Binds to muscle nicotinic acetylcholine receptor (nAChR) and inhibit acetylcholine from binding to the receptor, thereby impairing neuromuscular transmission. This Hydrophis peronii (Spiny-headed seasnake) protein is Short neurotoxin 1.